A 248-amino-acid chain; its full sequence is 5'-nucleotidase SurE (248 aa).

A divalent metal cation-binding residues include D8, D9, S39, and N92.

It belongs to the SurE nucleotidase family. The cofactor is a divalent metal cation.

The protein localises to the cytoplasm. It carries out the reaction a ribonucleoside 5'-phosphate + H2O = a ribonucleoside + phosphate. Functionally, nucleotidase that shows phosphatase activity on nucleoside 5'-monophosphates. The sequence is that of 5'-nucleotidase SurE from Tolumonas auensis (strain DSM 9187 / NBRC 110442 / TA 4).